An 86-amino-acid chain; its full sequence is Testis-expressed protein 54 (86 aa).

Basic and acidic residues predominate over residues 1–34 (MGCCQDKNRWASDEQARDEVTEDGREGNEVDNSG). Disordered stretches follow at residues 1–43 (MGCC…SNES) and 57–86 (SRRESSRSGKQDNQMQERKHEGSHKEPEKG).

In terms of tissue distribution, expressed in Testis.

The protein is Testis-expressed protein 54 of Mus musculus (Mouse).